The sequence spans 446 residues: Probable inactive lipase MT1628 (446 aa).

This sequence belongs to the AB hydrolase superfamily. Lipase family.

The sequence is that of Probable inactive lipase MT1628 from Mycobacterium tuberculosis (strain CDC 1551 / Oshkosh).